Reading from the N-terminus, the 250-residue chain is uncharacterized protein (250 aa).

The N-terminal 52 residues, 1-52 (MALAWCVVRRSASKFASVYGGRVRSISAVANRASLARNPSSIRPFVSRALNY), are a transit peptide targeting the mitochondrion. Residues 124-147 (PSLVSDENDDDDDDDEGPSNESSI) are disordered. Residues 129–141 (DENDDDDDDDEGP) show a composition bias toward acidic residues.

This sequence belongs to the MAM33 family.

It localises to the mitochondrion matrix. This is an uncharacterized protein from Arabidopsis thaliana (Mouse-ear cress).